We begin with the raw amino-acid sequence, 422 residues long: MILVKDANINGKKQDLLVEGNIIKKIGNISISEVSKDETEIIDGKNCVLIPGLVNTHTHVPMSLFRGVADDIPLMEWLSGHIWPMESKLNEKIVYAGTLLGTIEMIKSGTTAFNDMYFFLDSIIKAVDETGIRSTIAYGMIDLFDEEKREKELKTAKESLEMIKNLNNSRITGALGPHAPYTCSKEILDSTNALAREYNVPIHIHMNETLDEINQVVEKTGIRPFEYLNSFGFFDNVNTICAHCVHLSDSEIQIMKEKNIFVAHNPVSNLKLASGVSPVLKLLENNISVTLGTDGCGSNNNMNLFEEIKAAALIHKGVNLNPVAVTAKEAFEFGTKNGAKALNINSGEIKEGKLADFVLINMKKPYLTPKENIESHLVYSFNGVVDTVVIDGKIVLNDGKMVNIDEEKVYELAEEAYLELAN.

Zn(2+)-binding residues include His-57 and His-59. The substrate site is built by Glu-86 and His-178. A Zn(2+)-binding site is contributed by His-205. Substrate is bound by residues Glu-208 and Asp-294. Asp-294 contributes to the Zn(2+) binding site.

Belongs to the metallo-dependent hydrolases superfamily. MTA/SAH deaminase family. As to quaternary structure, homotetramer. The cofactor is Zn(2+).

It carries out the reaction 5'-deoxyadenosine + H2O + H(+) = 5'-deoxyinosine + NH4(+). The enzyme catalyses S-adenosyl-L-homocysteine + H2O + H(+) = S-inosyl-L-homocysteine + NH4(+). It catalyses the reaction S-methyl-5'-thioadenosine + H2O + H(+) = S-methyl-5'-thioinosine + NH4(+). The catalysed reaction is adenosine + H2O + H(+) = inosine + NH4(+). The protein operates within amino-acid biosynthesis; S-adenosyl-L-methionine biosynthesis. Catalyzes the deamination of three SAM-derived enzymatic products, namely 5'-deoxyadenosine, S-adenosyl-L-homocysteine, and 5'-methylthioadenosine, to produce the inosine analogs. Can also deaminate adenosine. The preferred substrate for this enzyme is 5'-deoxyadenosine, but all these substrates are efficiently deaminated. Likely functions in a S-adenosyl-L-methionine (SAM) recycling pathway from S-adenosyl-L-homocysteine (SAH) produced from SAM-dependent methylation reactions. May also be involved in the recycling of 5'-deoxyadenosine, whereupon the 5'-deoxyribose moiety of 5'-deoxyinosine is further metabolized to deoxyhexoses used for the biosynthesis of aromatic amino acids in methanogens. In Methanococcus maripaludis (strain C6 / ATCC BAA-1332), this protein is 5'-deoxyadenosine deaminase.